Here is a 417-residue protein sequence, read N- to C-terminus: Senescence-associated protein AAF, chloroplastic (417 aa).

The transit peptide at 1–36 (MALNVSKVVPNSPILVKSVNASRSRRVLLAYVHHPL) directs the protein to the chloroplast.

Belongs to the ATA15/OSA15 family. As to expression, expressed in leaves. Expressed in 7-day-old seedlings, roots, rosette leaves, cauline leaves and flower buds.

The protein resides in the plastid. It is found in the chloroplast. Functionally, involved in modulation of redox homeostasis to regulate leaf senescence mediated by age and stress factors during plant development. Its function is dependent of EIN2, a central factor of ethylene signaling. This Arabidopsis thaliana (Mouse-ear cress) protein is Senescence-associated protein AAF, chloroplastic.